Reading from the N-terminus, the 196-residue chain is Holliday junction branch migration complex subunit RuvA (196 aa).

The tract at residues 1–63 is domain I; it reads MIASVRGEVL…EDSMTLYGFP (63 aa). The domain II stretch occupies residues 64–138; that stretch reads DGETRDLFLT…DKVGVAATGG (75 aa). The tract at residues 138-142 is flexible linker; it reads GALST. Residues 143 to 196 form a domain III region; it reads NGHAVRSPVVEALVGLGFAAKQAEEATDTVLAANHDATTSSALRSALSLLGKAR.

This sequence belongs to the RuvA family. As to quaternary structure, homotetramer. Forms an RuvA(8)-RuvB(12)-Holliday junction (HJ) complex. HJ DNA is sandwiched between 2 RuvA tetramers; dsDNA enters through RuvA and exits via RuvB. An RuvB hexamer assembles on each DNA strand where it exits the tetramer. Each RuvB hexamer is contacted by two RuvA subunits (via domain III) on 2 adjacent RuvB subunits; this complex drives branch migration. In the full resolvosome a probable DNA-RuvA(4)-RuvB(12)-RuvC(2) complex forms which resolves the HJ.

Its subcellular location is the cytoplasm. In terms of biological role, the RuvA-RuvB-RuvC complex processes Holliday junction (HJ) DNA during genetic recombination and DNA repair, while the RuvA-RuvB complex plays an important role in the rescue of blocked DNA replication forks via replication fork reversal (RFR). RuvA specifically binds to HJ cruciform DNA, conferring on it an open structure. The RuvB hexamer acts as an ATP-dependent pump, pulling dsDNA into and through the RuvAB complex. HJ branch migration allows RuvC to scan DNA until it finds its consensus sequence, where it cleaves and resolves the cruciform DNA. The protein is Holliday junction branch migration complex subunit RuvA of Mycobacterium bovis (strain ATCC BAA-935 / AF2122/97).